We begin with the raw amino-acid sequence, 872 residues long: Probably inactive leucine-rich repeat receptor-like protein kinase At5g06940 (872 aa).

Positions 1-26 (MATRFKHQFSISLALTFFFFFTKTFS) are cleaved as a signal peptide. Topologically, residues 27–540 (FTENEELGNL…RSNFHKKGGK (514 aa)) are extracellular. 3 N-linked (GlcNAc...) asparagine glycosylation sites follow: Asn-55, Asn-63, and Asn-86. 18 LRR repeats span residues 79-98 (SINL…ICDL), 99-122 (PYLT…LSRC), 123-146 (VTLE…ISEF), 147-169 (SSLK…DLGL), 171-193 (FNLQ…AIGK), 195-217 (SELV…SFLG), 219-243 (LDKL…FVGL), 244-267 (TSLR…LGPS), 269-292 (KNLV…ICSG), 294-316 (RLIN…IGEC), 317-340 (LSLE…LWKL), 341-365 (PRIK…SLAS), 367-389 (LEQV…GLVK), 391-412 (LYKF…FCDS), 413-435 (PVLS…LKNC), 436-459 (KKLV…LADL), 460-482 (HVLT…GLQN), and 484-506 (KLAL…LVSG). N-linked (GlcNAc...) asparagine glycosylation is present at Asn-129. Residue Asn-255 is glycosylated (N-linked (GlcNAc...) asparagine). Asn-297 is a glycosylation site (N-linked (GlcNAc...) asparagine). The N-linked (GlcNAc...) asparagine glycan is linked to Asn-374. Asn-419 carries an N-linked (GlcNAc...) asparagine glycan. Asn-489 is a glycosylation site (N-linked (GlcNAc...) asparagine). Residues 541–561 (ALVLSLICLALAIATFLAVLY) form a helical membrane-spanning segment. Residues 562-872 (RYSRKKVQFK…ISSSVSPVSA (311 aa)) lie on the Cytoplasmic side of the membrane. The residue at position 585 (Thr-585) is a Phosphothreonine. Positions 589-863 (LMKVVNESCP…VKVIKLLEGI (275 aa)) constitute a Protein kinase domain. ATP is bound by residues 595–603 (ESCPSGSEV) and Lys-617. Phosphotyrosine occurs at positions 662, 699, 754, and 761.

Belongs to the protein kinase superfamily. Ser/Thr protein kinase family.

It is found in the membrane. This chain is Probably inactive leucine-rich repeat receptor-like protein kinase At5g06940, found in Arabidopsis thaliana (Mouse-ear cress).